The chain runs to 268 residues: Probable ribosomal RNA small subunit methyltransferase A (268 aa).

Positions 23, 25, 50, 71, 95, and 110 each coordinate S-adenosyl-L-methionine.

This sequence belongs to the class I-like SAM-binding methyltransferase superfamily. rRNA adenine N(6)-methyltransferase family. RsmA subfamily.

It is found in the cytoplasm. Functionally, specifically dimethylates two adjacent adenosines in the loop of a conserved hairpin near the 3'-end of 16S rRNA in the 30S particle. May play a critical role in biogenesis of 30S subunits. This chain is Probable ribosomal RNA small subunit methyltransferase A, found in Pyrococcus horikoshii (strain ATCC 700860 / DSM 12428 / JCM 9974 / NBRC 100139 / OT-3).